Consider the following 197-residue polypeptide: Shikimate kinase (197 aa).

26-31 (GSGKSR) serves as a coordination point for ATP. S30 provides a ligand contact to Mg(2+). Substrate is bound by residues D48, R72, and G94. R132 lines the ATP pocket. R150 is a binding site for substrate.

The protein belongs to the shikimate kinase family. Monomer. It depends on Mg(2+) as a cofactor.

The protein resides in the cytoplasm. The enzyme catalyses shikimate + ATP = 3-phosphoshikimate + ADP + H(+). It functions in the pathway metabolic intermediate biosynthesis; chorismate biosynthesis; chorismate from D-erythrose 4-phosphate and phosphoenolpyruvate: step 5/7. In terms of biological role, catalyzes the specific phosphorylation of the 3-hydroxyl group of shikimic acid using ATP as a cosubstrate. The polypeptide is Shikimate kinase (Prochlorococcus marinus (strain MIT 9211)).